Consider the following 116-residue polypeptide: Probable non-functional immunoglobulin kappa variable 3-7 (116 aa).

An N-terminal signal peptide occupies residues 1 to 21 (MEAPAQLLFLLLLWLPDTTRE). The interval 21–43 (EIVMTQSPPTLSLSPGERVTLSC) is framework-1. Positions 22 to 116 (IVMTQSPPTL…YYCQQDYNLP (95 aa)) constitute an Ig-like domain. Cys-43 and Cys-109 are disulfide-bonded. A complementarity-determining-1 region spans residues 44–55 (RASQSVSSSYLT). Residues 56–70 (WYQQKPGQAPRLLIY) form a framework-2 region. Residues 71-77 (GASTRAT) form a complementarity-determining-2 region. The interval 78–109 (SIPARFSGSGSGTDFTLTISSLQPEDFAVYYC) is framework-3. A complementarity-determining-3 region spans residues 110–116 (QQDYNLP).

Immunoglobulins are composed of two identical heavy chains and two identical light chains; disulfide-linked.

The protein localises to the secreted. It is found in the cell membrane. Functionally, probable non-functional open reading frame (ORF) of V region of the variable domain of immunoglobulin light chains. Non-functional ORF generally cannot participate in the synthesis of a productive immunoglobulin chain due to altered V-(D)-J or switch recombination and/or splicing site (at mRNA level) and/or conserved amino acid change (protein level). Immunoglobulins, also known as antibodies, are membrane-bound or secreted glycoproteins produced by B lymphocytes. In the recognition phase of humoral immunity, the membrane-bound immunoglobulins serve as receptors which, upon binding of a specific antigen, trigger the clonal expansion and differentiation of B lymphocytes into immunoglobulins-secreting plasma cells. Secreted immunoglobulins mediate the effector phase of humoral immunity, which results in the elimination of bound antigens. The antigen binding site is formed by the variable domain of one heavy chain, together with that of its associated light chain. Thus, each immunoglobulin has two antigen binding sites with remarkable affinity for a particular antigen. The variable domains are assembled by a process called V-(D)-J rearrangement and can then be subjected to somatic hypermutations which, after exposure to antigen and selection, allow affinity maturation for a particular antigen. The polypeptide is Probable non-functional immunoglobulin kappa variable 3-7 (Homo sapiens (Human)).